The sequence spans 101 residues: Putative regulatory protein Csac_2087 (101 aa).

This sequence belongs to the RemA family.

This is Putative regulatory protein Csac_2087 from Caldicellulosiruptor saccharolyticus (strain ATCC 43494 / DSM 8903 / Tp8T 6331).